A 202-amino-acid chain; its full sequence is Probable nicotinate-nucleotide adenylyltransferase (202 aa).

Belongs to the NadD family.

The catalysed reaction is nicotinate beta-D-ribonucleotide + ATP + H(+) = deamido-NAD(+) + diphosphate. Its pathway is cofactor biosynthesis; NAD(+) biosynthesis; deamido-NAD(+) from nicotinate D-ribonucleotide: step 1/1. In terms of biological role, catalyzes the reversible adenylation of nicotinate mononucleotide (NaMN) to nicotinic acid adenine dinucleotide (NaAD). In Clostridium perfringens (strain 13 / Type A), this protein is Probable nicotinate-nucleotide adenylyltransferase.